A 320-amino-acid chain; its full sequence is ATP-dependent 6-phosphofructokinase (320 aa).

G12 is an ATP binding site. 22 to 26 (RGVVR) is an ADP binding site. ATP-binding positions include 73-74 (RF) and 103-106 (GDGS). D104 serves as a coordination point for Mg(2+). A substrate-binding site is contributed by 126–128 (TID). D128 serves as the catalytic Proton acceptor. An ADP-binding site is contributed by R155. Substrate is bound by residues R163 and 170–172 (MGR). ADP contacts are provided by residues 186-188 (GCE), K212, and 214-216 (KKH). Substrate is bound by residues E223, R244, and 250 to 253 (HIQR).

The protein belongs to the phosphofructokinase type A (PFKA) family. ATP-dependent PFK group I subfamily. Prokaryotic clade 'B1' sub-subfamily. In terms of assembly, homotetramer. Mg(2+) is required as a cofactor.

It localises to the cytoplasm. The enzyme catalyses beta-D-fructose 6-phosphate + ATP = beta-D-fructose 1,6-bisphosphate + ADP + H(+). The protein operates within carbohydrate degradation; glycolysis; D-glyceraldehyde 3-phosphate and glycerone phosphate from D-glucose: step 3/4. With respect to regulation, allosterically activated by ADP and other diphosphonucleosides, and allosterically inhibited by phosphoenolpyruvate. Functionally, catalyzes the phosphorylation of D-fructose 6-phosphate to fructose 1,6-bisphosphate by ATP, the first committing step of glycolysis. This is ATP-dependent 6-phosphofructokinase from Edwardsiella ictaluri (strain 93-146).